A 292-amino-acid chain; its full sequence is Acetylglutamate kinase (292 aa).

Residues 64–65 (GG), R86, and N190 each bind substrate.

This sequence belongs to the acetylglutamate kinase family. ArgB subfamily.

It is found in the cytoplasm. It catalyses the reaction N-acetyl-L-glutamate + ATP = N-acetyl-L-glutamyl 5-phosphate + ADP. The protein operates within amino-acid biosynthesis; L-arginine biosynthesis; N(2)-acetyl-L-ornithine from L-glutamate: step 2/4. In terms of biological role, catalyzes the ATP-dependent phosphorylation of N-acetyl-L-glutamate. In Geotalea uraniireducens (strain Rf4) (Geobacter uraniireducens), this protein is Acetylglutamate kinase.